A 276-amino-acid polypeptide reads, in one-letter code: MAVLLSILSSSFLLLLAASSSSTPRASACERCVRNGKAAYSPSLSPLPPGGGGGCGYGAMAMEMELNGGFLAAGGPRQHRGGLGCGRCFQMRCRNAEVCSNAGVRVVLTDFHRSNSTDFLLGGPAFAGLAKPGMAHKLKKLDALSVEYRRIPCDYKDKNLSILVEEQSKRPNNLVIKFLYQGGQTDILAVDVAQVGSSDWRFMTRVYGPVWSIDRAPNGPLQFRAVVTGGYDGKWVWADREVLPANWQPGQVYDTGARIADVARESCLDCATLDWK.

Residues 1-28 (MAVLLSILSSSFLLLLAASSSSTPRASA) form the signal peptide. The region spanning 52–158 (GGGCGYGAMA…RRIPCDYKDK (107 aa)) is the Expansin-like EG45 domain. N-linked (GlcNAc...) asparagine glycosylation is found at Asn-115 and Asn-159. One can recognise an Expansin-like CBD domain in the interval 172–255 (NNLVIKFLYQ…NWQPGQVYDT (84 aa)).

This sequence belongs to the expansin family. Expansin-like A subfamily.

It localises to the secreted. The polypeptide is Expansin-like A3 (EXLA3) (Oryza sativa subsp. japonica (Rice)).